The chain runs to 445 residues: UDP-N-acetylmuramoylalanine--D-glutamate ligase (445 aa).

117–123 lines the ATP pocket; it reads GSNGKTT.

The protein belongs to the MurCDEF family.

It is found in the cytoplasm. It catalyses the reaction UDP-N-acetyl-alpha-D-muramoyl-L-alanine + D-glutamate + ATP = UDP-N-acetyl-alpha-D-muramoyl-L-alanyl-D-glutamate + ADP + phosphate + H(+). It functions in the pathway cell wall biogenesis; peptidoglycan biosynthesis. In terms of biological role, cell wall formation. Catalyzes the addition of glutamate to the nucleotide precursor UDP-N-acetylmuramoyl-L-alanine (UMA). This chain is UDP-N-acetylmuramoylalanine--D-glutamate ligase, found in Neisseria meningitidis serogroup C (strain 053442).